The chain runs to 118 residues: Small ribosomal subunit protein uS13 (118 aa).

The disordered stretch occupies residues 94–118 (GLPVRGQRTKTNARTRKGPRKPIKK).

This sequence belongs to the universal ribosomal protein uS13 family. Part of the 30S ribosomal subunit. Forms a loose heterodimer with protein S19. Forms two bridges to the 50S subunit in the 70S ribosome.

Located at the top of the head of the 30S subunit, it contacts several helices of the 16S rRNA. In the 70S ribosome it contacts the 23S rRNA (bridge B1a) and protein L5 of the 50S subunit (bridge B1b), connecting the 2 subunits; these bridges are implicated in subunit movement. Contacts the tRNAs in the A and P-sites. This Histophilus somni (strain 129Pt) (Haemophilus somnus) protein is Small ribosomal subunit protein uS13.